The following is a 785-amino-acid chain: Neutral ceramidase (785 aa).

An N-terminal signal peptide occupies residues 1-35; the sequence is MEASSWLCYQARGFGSSRVWLWLLLALVLLNCSLV. N31 carries an N-linked (GlcNAc...) asparagine glycan. S359 serves as the catalytic Nucleophile. 3 N-linked (GlcNAc...) asparagine glycosylation sites follow: N377, N675, and N685.

This sequence belongs to the neutral ceramidase family. In terms of tissue distribution, expressed in seedlings, with higher levels in roots than in shoots.

The protein resides in the secreted. It is found in the endoplasmic reticulum. Its subcellular location is the golgi apparatus. It catalyses the reaction an N-acylsphing-4-enine + H2O = sphing-4-enine + a fatty acid. With respect to regulation, enhanced activity in the presence of calcium, magnesium, manganese and zinc ions, but inhibited activity in the presence of iron ion. Its function is as follows. Hydrolyzes the sphingolipid ceramide into sphingosine and free fatty acid. Uses ceramide instead of phytoceramide as substrate. The sequence is that of Neutral ceramidase from Oryza sativa subsp. japonica (Rice).